Reading from the N-terminus, the 455-residue chain is Bleomycin hydrolase (455 aa).

Position 1 is an N-acetylmethionine (Met-1). Active-site residues include Cys-73 and His-372. Position 391 is an N6-acetyllysine (Lys-391). Residue Asn-396 is part of the active site.

Belongs to the peptidase C1 family. As to quaternary structure, homohexamer. Interacts with NUDT12 (via ANK repeats).

The protein resides in the cytoplasm. It localises to the cytoplasmic granule. The catalysed reaction is Inactivates bleomycin B2 (a cytotoxic glycometallopeptide) by hydrolysis of a carboxyamide bond of beta-aminoalanine, but also shows general aminopeptidase activity. The specificity varies somewhat with source, but amino acid arylamides of Met, Leu and Ala are preferred.. Functionally, the normal physiological role of BLM hydrolase is unknown, but it catalyzes the inactivation of the antitumor drug BLM (a glycopeptide) by hydrolyzing the carboxamide bond of its B-aminoalaninamide moiety thus protecting normal and malignant cells from BLM toxicity. The polypeptide is Bleomycin hydrolase (Blmh) (Mus musculus (Mouse)).